Consider the following 922-residue polypeptide: Up-regulator of cell proliferation (922 aa).

The segment at Met-1–Glu-20 is disordered. Ser-3 is modified (phosphoserine). Residues Arg-680–Arg-920 enclose the VLIG-type G domain.

The protein belongs to the TRAFAC class dynamin-like GTPase superfamily. Very large inducible GTPase (VLIG) family.

The protein resides in the cytoplasm. Its subcellular location is the nucleus. May be involved in cell cycle progression through the regulation of cyclin D1 expression. This chain is Up-regulator of cell proliferation (URGCP), found in Bos taurus (Bovine).